Here is a 630-residue protein sequence, read N- to C-terminus: DNA topoisomerase 4 subunit B (630 aa).

ATP contacts are provided by residues Tyr5, Asn42, Asp69, 110–116, and Lys334; that span reads GLHGVGI. In terms of domain architecture, Toprim spans 412 to 525; the sequence is TELFLVEGDS…HGHVYVALPP (114 aa). Glu418, Asp490, and Asp492 together coordinate Mg(2+).

The protein belongs to the type II topoisomerase family. ParE type 1 subfamily. As to quaternary structure, heterotetramer composed of ParC and ParE. Mg(2+) serves as cofactor. Requires Mn(2+) as cofactor. Ca(2+) is required as a cofactor.

The catalysed reaction is ATP-dependent breakage, passage and rejoining of double-stranded DNA.. With respect to regulation, pyrrolopyrimidines inhibit both GyrB and its paralog in topoisomerase IV (parE). Topoisomerase IV is essential for chromosome segregation; it is the principal protein responsible for decatenating newly replicated chromosomes. It relaxes supercoiled DNA. MukB stimulates the relaxation activity of topoisomerase IV and also has a modest effect on decatenation. In Escherichia coli (strain K12), this protein is DNA topoisomerase 4 subunit B.